A 282-amino-acid polypeptide reads, in one-letter code: 1D-myo-inositol 2-acetamido-2-deoxy-alpha-D-glucopyranoside deacetylase (282 aa).

The Zn(2+) site is built by H6, D9, and H141.

This sequence belongs to the MshB deacetylase family. It depends on Zn(2+) as a cofactor.

The catalysed reaction is 1D-myo-inositol 2-acetamido-2-deoxy-alpha-D-glucopyranoside + H2O = 1D-myo-inositol 2-amino-2-deoxy-alpha-D-glucopyranoside + acetate. In terms of biological role, catalyzes the deacetylation of 1D-myo-inositol 2-acetamido-2-deoxy-alpha-D-glucopyranoside (GlcNAc-Ins) in the mycothiol biosynthesis pathway. The chain is 1D-myo-inositol 2-acetamido-2-deoxy-alpha-D-glucopyranoside deacetylase from Nocardiopsis dassonvillei (strain ATCC 23218 / DSM 43111 / CIP 107115 / JCM 7437 / KCTC 9190 / NBRC 14626 / NCTC 10488 / NRRL B-5397 / IMRU 509) (Actinomadura dassonvillei).